We begin with the raw amino-acid sequence, 3630 residues long: Trimeric autotransporter adhesin AtaA (3630 aa).

The N-terminal stretch at 1 to 23 (MNKIYKVIWNATLLAWVAVSELA) is a signal peptide. Residues 24 to 3487 (KGKTKSTTSK…TNQAVVNYLG (3464 aa)) are surface exposed passenger domain. An N-terminal YadA-like head region spans residues 108–315 (SIAIGENAQG…ASDAVTVAQL (208 aa)). The segment at 316 to 2904 (DKAYDDTNGR…GRAATEEQLK (2589 aa)) is N-terminal stalk. Residues 2905–3169 (AVITSNITEV…DSDAVNVAQL (265 aa)) are C-terminal YadA-like head. The tract at residues 3170-3561 (KAVGNQVVTT…DVEKKANAGI (392 aa)) is C-terminal stalk. Residues 3539–3574 (LDNAFRITNNRIDDVEKKANAGIAAAMALESAPYVP) form an outer membrane translocation of the passenger domain region. The next 4 membrane-spanning stretches (beta stranded) occupy residues 3575-3585 (GKYTYAAGAAY), 3589-3599 (ENAVGVTLRKT), 3608-3614 (TGGVAAA), and 3618-3629 (DASVRIGISGVI). Positions 3575-3630 (GKYTYAAGAAYHGGENAVGVTLRKTADNGRWSITGGVAAASQGDASVRIGISGVID) are translocator domain.

Belongs to the autotransporter-2 (AT-2) (TC 1.B.40) family. Homotrimer. Interacts with TpgA.

It localises to the cell surface. It is found in the cell outer membrane. Responsible for autoagglutination, and for adhesion to abiotic and biotic surfaces such as polystyrene (PS), type I collagen, polypropylene (PP), polyvinylchloride (PVC), glass and stainless steel (SS). Adhesion is much stronger than that mediated by Yersinia YadA in a comparative assay. Confers autoagglutination and binding to PS, type I collagen, PP, PVC, glass and SS upon expression in Acinetobacter baylyi strain ADP1. Involved in rapid, irreversible adherence to polyurethane. Forms an unusual biofilm. An extended, surface exposed fiber binds to quartz crystals, PS and glass. It can be removed by washing in distilled water. The polypeptide is Trimeric autotransporter adhesin AtaA (Acinetobacter sp. (strain Tol 5)).